A 199-amino-acid chain; its full sequence is CASP-like protein 1D2 (199 aa).

The segment at 1-27 (MASTENPDPETGKSEPIPASATPPPSS) is disordered. Alanine 2 carries the post-translational modification N-acetylalanine. At 2 to 36 (ASTENPDPETGKSEPIPASATPPPSSAASFLDCRK) the chain is on the cytoplasmic side. Residues 37 to 57 (IDIITRVLLFSATLTALIVMV) form a helical membrane-spanning segment. Residues 58–85 (TSDQTEMTQLPGVSSPAPVSAEFNDSPA) lie on the Extracellular side of the membrane. Residues 86–106 (FIYFVVALVVASFYALISTLV) form a helical membrane-spanning segment. Residues 107-129 (SISLLLKPEFTAQFSIYLASLDM) lie on the Cytoplasmic side of the membrane. Residues 130-150 (VMLGILASATGTAGGVAYIAL) form a helical membrane-spanning segment. Residues 151–171 (KGNEEVGWNKICNVYDKFCRY) are Extracellular-facing. The chain crosses the membrane as a helical span at residues 172-192 (IATSLALSLFASLLLLVLSIW). The Cytoplasmic portion of the chain corresponds to 193–199 (SALSKRT).

Belongs to the Casparian strip membrane proteins (CASP) family. As to quaternary structure, homodimer and heterodimers. As to expression, expressed in the root endodermis and flowers.

The protein resides in the cell membrane. This is CASP-like protein 1D2 from Arabidopsis thaliana (Mouse-ear cress).